Reading from the N-terminus, the 154-residue chain is SsrA-binding protein (154 aa).

The protein belongs to the SmpB family.

It localises to the cytoplasm. Its function is as follows. Required for rescue of stalled ribosomes mediated by trans-translation. Binds to transfer-messenger RNA (tmRNA), required for stable association of tmRNA with ribosomes. tmRNA and SmpB together mimic tRNA shape, replacing the anticodon stem-loop with SmpB. tmRNA is encoded by the ssrA gene; the 2 termini fold to resemble tRNA(Ala) and it encodes a 'tag peptide', a short internal open reading frame. During trans-translation Ala-aminoacylated tmRNA acts like a tRNA, entering the A-site of stalled ribosomes, displacing the stalled mRNA. The ribosome then switches to translate the ORF on the tmRNA; the nascent peptide is terminated with the 'tag peptide' encoded by the tmRNA and targeted for degradation. The ribosome is freed to recommence translation, which seems to be the essential function of trans-translation. This is SsrA-binding protein from Treponema denticola (strain ATCC 35405 / DSM 14222 / CIP 103919 / JCM 8153 / KCTC 15104).